A 569-amino-acid chain; its full sequence is Sulfite reductase [NADPH] hemoprotein beta-component (569 aa).

[4Fe-4S] cluster contacts are provided by cysteine 434, cysteine 440, cysteine 479, and cysteine 483. Cysteine 483 contributes to the siroheme binding site.

The protein belongs to the nitrite and sulfite reductase 4Fe-4S domain family. As to quaternary structure, alpha(8)-beta(8). The alpha component is a flavoprotein, the beta component is a hemoprotein. The cofactor is siroheme. Requires [4Fe-4S] cluster as cofactor.

The enzyme catalyses hydrogen sulfide + 3 NADP(+) + 3 H2O = sulfite + 3 NADPH + 4 H(+). The protein operates within sulfur metabolism; hydrogen sulfide biosynthesis; hydrogen sulfide from sulfite (NADPH route): step 1/1. Its function is as follows. Component of the sulfite reductase complex that catalyzes the 6-electron reduction of sulfite to sulfide. This is one of several activities required for the biosynthesis of L-cysteine from sulfate. This chain is Sulfite reductase [NADPH] hemoprotein beta-component, found in Staphylococcus carnosus (strain TM300).